The primary structure comprises 500 residues: Protein FAM114A2 (500 aa).

The disordered stretch occupies residues 1–82; that stretch reads MSNKDDLETA…AAGKETVSKD (82 aa). Phosphoserine is present on residues S93, S152, and S215.

Belongs to the FAM114 family.

The protein is Protein FAM114A2 (FAM114A1) of Bos taurus (Bovine).